Here is a 311-residue protein sequence, read N- to C-terminus: Glycosyltransferase 6 domain-containing protein 1 (311 aa).

The Cytoplasmic segment spans residues 1–5 (MKAKG). Residues 6–26 (RILLLTSCLFLLLLLLAKIHL) traverse the membrane as a helical; Signal-anchor for type II membrane protein segment. Residues 27 to 311 (RNHQEEELPL…KVAHYPTDDL (285 aa)) are Lumenal-facing. Asn77 carries N-linked (GlcNAc...) asparagine glycosylation. Substrate-binding positions include 85–90 (FAVSSF), 176–178 (SVN), and 198–201 (HAWW). Glu266 (nucleophile) is an active-site residue.

This sequence belongs to the glycosyltransferase 6 family. The cofactor is Mn(2+).

The protein localises to the membrane. This Rattus norvegicus (Rat) protein is Glycosyltransferase 6 domain-containing protein 1 (Glt6d1).